We begin with the raw amino-acid sequence, 944 residues long: Serine/threonine-protein kinase ATG1 (944 aa).

The region spanning 24–327 (FNIGSEIGKG…FENFFTHQVV (304 aa)) is the Protein kinase domain. ATP contacts are provided by residues 30 to 38 (IGKGSFAQV) and K53. Residue D167 is the Proton acceptor of the active site. Positions 344-423 (RQESRDPRSA…NSPREGGEGL (80 aa)) are disordered. Positions 356 to 367 (SGSPSLSSRSPR) are enriched in low complexity. The LIR signature appears at 428-431 (PVAQ). Disordered regions lie at residues 443 to 475 (YDSVTGRNRASPPTSLLDQVRRNRALSNPPITE), 512 to 572 (LGDA…GSAS), 777 to 801 (QLPDDHPSHPSNHGTESIASSAGSP), 860 to 895 (EGSGSETRRLSTGKEAEREAVKEVSGGELDSDEEAH), and 925 to 944 (AVRRRSGDMTPRSVPSHASS). Composition is skewed to polar residues over residues 447-459 (TGRNRASPPTSLL) and 516-549 (SQRSGPITRRYTQQGAPTSTTGAISTPYSRNALA). Residues 563-572 (SLSASPGSAS) are compositionally biased toward low complexity. A compositionally biased stretch (polar residues) spans 785 to 801 (HPSNHGTESIASSAGSP). The segment covering 865 to 881 (ETRRLSTGKEAEREAVK) has biased composition (basic and acidic residues). The segment at 924 to 930 (QAVRRRS) is required for Cvt trafficking.

The protein belongs to the protein kinase superfamily. Ser/Thr protein kinase family. APG1/unc-51/ULK1 subfamily. In terms of assembly, homodimer. Dimerization requires the presence of ATG13. Forms a ternary complex with ATG13 and ATG17.

The protein localises to the cytoplasm. It localises to the preautophagosomal structure membrane. It carries out the reaction L-seryl-[protein] + ATP = O-phospho-L-seryl-[protein] + ADP + H(+). The catalysed reaction is L-threonyl-[protein] + ATP = O-phospho-L-threonyl-[protein] + ADP + H(+). In terms of biological role, serine/threonine protein kinase involved in the cytoplasm to vacuole transport (Cvt) and found to be essential in autophagy, where it is required for the formation of autophagosomes. Involved in the clearance of protein aggregates which cannot be efficiently cleared by the proteasome. Required for selective autophagic degradation of the nucleus (nucleophagy) as well as for mitophagy which contributes to regulate mitochondrial quantity and quality by eliminating the mitochondria to a basal level to fulfill cellular energy requirements and preventing excess ROS production. Also involved in endoplasmic reticulum-specific autophagic process, in selective removal of ER-associated degradation (ERAD) substrates. Plays a key role in ATG9 and ATG23 cycling through the pre-autophagosomal structure and is necessary to promote ATG18 binding to ATG9 through phosphorylation of ATG9. Catalyzes phosphorylation of ATG4, decreasing the interaction between ATG4 and ATG8 and impairing deconjugation of PE-conjugated forms of ATG8. Autophagy is required for proper vegetative growth, asexual/sexual reproduction, and full virulence. Autophagy is particularly involved in the biosynthesis of deoxynivalenol (DON), an important virulence determinant. This chain is Serine/threonine-protein kinase ATG1, found in Gibberella zeae (strain ATCC MYA-4620 / CBS 123657 / FGSC 9075 / NRRL 31084 / PH-1) (Wheat head blight fungus).